The chain runs to 218 residues: Glycerol-3-phosphate acyltransferase (218 aa).

5 helical membrane passes run 10-30 (LTLG…FGLI), 60-80 (DLAA…VLLA), 88-108 (PAII…PVWL), 125-145 (SAAW…AFLF), and 165-185 (AFDQ…LIFI).

It belongs to the PlsY family. Probably interacts with PlsX.

The protein localises to the cell inner membrane. The enzyme catalyses an acyl phosphate + sn-glycerol 3-phosphate = a 1-acyl-sn-glycero-3-phosphate + phosphate. Its pathway is lipid metabolism; phospholipid metabolism. Functionally, catalyzes the transfer of an acyl group from acyl-phosphate (acyl-PO(4)) to glycerol-3-phosphate (G3P) to form lysophosphatidic acid (LPA). This enzyme utilizes acyl-phosphate as fatty acyl donor, but not acyl-CoA or acyl-ACP. This chain is Glycerol-3-phosphate acyltransferase, found in Caulobacter vibrioides (strain ATCC 19089 / CIP 103742 / CB 15) (Caulobacter crescentus).